A 271-amino-acid chain; its full sequence is Cartilage-associated protein (271 aa).

An N-terminal signal peptide occupies residues 1-15 (MWRTLLAALLATAGA). An N-linked (GlcNAc...) asparagine glycan is attached at Asn76.

Belongs to the leprecan family. In terms of tissue distribution, found in articular chondrocytes. Expressed in a variety of tissues.

Its subcellular location is the secreted. It localises to the extracellular space. It is found in the extracellular matrix. Its function is as follows. Necessary for efficient 3-hydroxylation of fibrillar collagen prolyl residues. This chain is Cartilage-associated protein (CRTAP), found in Gallus gallus (Chicken).